We begin with the raw amino-acid sequence, 977 residues long: Synaptonemal complex protein 2-like (977 aa).

Disordered regions lie at residues 447 to 474 (LGSQ…LSNA), 574 to 593 (QSTE…NSPL), 642 to 728 (RNKS…QDIM), and 804 to 824 (TEKN…VFYS). Low complexity predominate over residues 449 to 462 (SQTSEHSSTTKTSS). The segment covering 463–474 (ANRSVQKSLSNA) has biased composition (polar residues). A compositionally biased stretch (basic and acidic residues) spans 674-693 (SRKEMHRPEDINPKSPHSAE).

It belongs to the SYCP2 family. Post-translationally, ubiquitinated and gradually degraded by the proteasome during oocyte maturation. Phosphorylated in maturing oocytes, before its degradation. As to expression, expressed in immature oocytes (at protein level). Expressed in the ovary.

It localises to the nucleus. The protein resides in the chromosome. Its subcellular location is the centromere. It is found in the nucleolus. Functionally, oocyte-specific protein that localizes to centromeres at the dictyate stage and regulates the survival of primordial oocytes. The sequence is that of Synaptonemal complex protein 2-like (sycp2l) from Xenopus laevis (African clawed frog).